The chain runs to 365 residues: Eukaryotic translation initiation factor 3 subunit H (365 aa).

Positions 11–160 (VKVDALVVMK…LRAFRLSSKF (150 aa)) constitute an MPN domain.

The protein belongs to the eIF-3 subunit H family. In terms of assembly, component of the eukaryotic translation initiation factor 3 (eIF-3) complex.

Its subcellular location is the cytoplasm. Component of the eukaryotic translation initiation factor 3 (eIF-3) complex, which is involved in protein synthesis of a specialized repertoire of mRNAs and, together with other initiation factors, stimulates binding of mRNA and methionyl-tRNAi to the 40S ribosome. The eIF-3 complex specifically targets and initiates translation of a subset of mRNAs involved in cell proliferation. This Aspergillus oryzae (strain ATCC 42149 / RIB 40) (Yellow koji mold) protein is Eukaryotic translation initiation factor 3 subunit H.